Reading from the N-terminus, the 386-residue chain is Alpha-D-kanosaminyltransferase (386 aa).

Belongs to the glycosyltransferase group 1 family.

It catalyses the reaction 2'-deamino-2'-hydroxyneamine + UDP-alpha-D-kanosamine = kanamycin A + UDP + H(+). It carries out the reaction neamine + UDP-alpha-D-kanosamine = kanamycin B + UDP + H(+). The catalysed reaction is paromamine + UDP-alpha-D-kanosamine = kanamycin C + UDP + H(+). The enzyme catalyses 2'-deamino-2'-hydroxyparomamine + UDP-alpha-D-kanosamine = kanamycin X + UDP + H(+). It functions in the pathway antibiotic biosynthesis; kanamycin biosynthesis. Glycosyltransferase involved in the biosynthesis of kanamycins by catalyzing the transfer of the hexose kanosamine from UDP-alpha-D-kanosamine to disaccharide precursors. Can also use UDP-alpha-D-glucose as sugar donor with much lower efficiency. This chain is Alpha-D-kanosaminyltransferase (kanE), found in Streptomyces kanamyceticus.